The primary structure comprises 538 residues: Calcium-dependent protein kinase 3 (538 aa).

Positions 23–70 (PKKSIERIKKKKDSNKSIKSQHKFEGSKISNKNNELKDVKSKDPKNYE) are disordered. A compositionally biased stretch (basic and acidic residues) spans 56–68 (NELKDVKSKDPKN). In terms of domain architecture, Protein kinase spans 112-367 (NLSEEPLGKG…ASEALKHPWF (256 aa)). Residues 118 to 126 (LGKGTYGCV) and lysine 141 contribute to the ATP site. The active-site Proton acceptor is aspartate 232. The J domain autoinhibitory motif motif lies at 387-395 (NFKNYALLL). The j domain stretch occupies residues 387–422 (NFKNYALLLKLQKLAMTIIAQQSNDYDLQQLKAVFL). Positions 396–405 (KLQKLAMTII) match the J domain EF-hand interaction motif motif. 3 EF-hand domains span residues 412–447 (YDLQQLKAVFLYLDEDGKGNITKNQLKKGLENSGLK), 450–481 (QNFDVLLDQIDSDGSGRIDYTEFLAAALDRKH), and 482–517 (LSKKLIYCAFRVFDVDNDGEITTAELAHVTFFVILF). Positions 460, 462, 464, 466, 471, 495, 497, 499, 501, and 506 each coordinate Ca(2+).

It belongs to the protein kinase superfamily. Ser/Thr protein kinase family. CDPK subfamily. Mg(2+) serves as cofactor.

Its subcellular location is the cytoplasm. It carries out the reaction L-seryl-[protein] + ATP = O-phospho-L-seryl-[protein] + ADP + H(+). The enzyme catalyses L-threonyl-[protein] + ATP = O-phospho-L-threonyl-[protein] + ADP + H(+). With respect to regulation, activated by calcium. Upon calcium binding to the EF-hand domain 2, the C-terminus of the junction domain (J domain) undergoes a conformational change which results in the dissociation of the pseudo-substrate inhibitory motif from the catalytic domain. This, in turn, may facilitate the autophosphorylation of the activation loop at Thr-273, which leads to the kinase activation. In terms of biological role, calcium-dependent protein kinase which acts as a sensor and effector of intracellular Ca(2+) levels probably in part downstream of cGMP-activated PKG kinase. In the mosquito midgut, regulates the gliding motility of the ookinete which is essential for the ookinete to invade the midgut epithelium. However, another study showed that while required for ookinete invasion of the midgut epithelium, is not required for ookinete gliding motility. In Plasmodium yoelii yoelii, this protein is Calcium-dependent protein kinase 3.